Here is a 361-residue protein sequence, read N- to C-terminus: Peptide chain release factor 1 (361 aa).

Glutamine 238 bears the N5-methylglutamine mark.

This sequence belongs to the prokaryotic/mitochondrial release factor family. In terms of processing, methylated by PrmC. Methylation increases the termination efficiency of RF1.

The protein localises to the cytoplasm. Peptide chain release factor 1 directs the termination of translation in response to the peptide chain termination codons UAG and UAA. The protein is Peptide chain release factor 1 of Mesomycoplasma hyopneumoniae (strain 7448) (Mycoplasma hyopneumoniae).